A 588-amino-acid polypeptide reads, in one-letter code: Intracellular maltogenic amylase (588 aa).

4 residues coordinate Ca(2+): Asn149, Ser155, Gly174, and Asp176. Residues His249 and Arg325 each contribute to the substrate site. The Nucleophile role is filled by Asp327. Glu356 functions as the Proton donor in the catalytic mechanism. Residues 422 to 423 (HD), Asp467, and Arg471 contribute to the substrate site.

It belongs to the glycosyl hydrolase 13 family. BbmA subfamily. Monomer or homodimer; in equilibrium. Requires Ca(2+) as cofactor.

The protein localises to the cytoplasm. Its function is as follows. Hydrolyzes beta-cyclodextrin to maltose and glucose, soluble starch to maltose and glucose, and pullulan to panose with trace amounts of maltose and glucose. It is also able to hydrolyze acarbose. Can also exhibit a transglycosylation activity transferring glucose or maltose to another moiety of sugars by forming alpha-(1,6)- and alpha-(1,3)-glycosidic linkages upon the hydrolysis of substrate at concentrations of 5% or higher. The polypeptide is Intracellular maltogenic amylase (bbmA) (Bacillus subtilis).